Reading from the N-terminus, the 206-residue chain is Large ribosomal subunit protein bL25 (206 aa).

Residues 1–91 form a bL25 domain region; that stretch reads MEYRLKAYYR…RPEHVDFFVL (91 aa). The segment at 92–206 is CTC domain; that stretch reads SDEPVEMYVP…IKKGKEEEEE (115 aa). The tract at residues 184 to 206 is disordered; that stretch reads AEEAAAEVAEPEVIKKGKEEEEE. Over residues 195–206 the composition is skewed to basic and acidic residues; that stretch reads EVIKKGKEEEEE.

This sequence belongs to the bacterial ribosomal protein bL25 family. CTC subfamily. Part of the 50S ribosomal subunit. Contacts the 5S rRNA.

This is one of 3 proteins that mediate the attachment of the 5S rRNA onto the large ribosomal subunit. The sequence is that of Large ribosomal subunit protein bL25 (rplY) from Thermus thermophilus.